A 149-amino-acid chain; its full sequence is Deoxyuridine 5'-triphosphate nucleotidohydrolase (149 aa).

Residues 68–70, Asn-81, 85–87, and Lys-95 contribute to the substrate site; these read RSG and TVD.

This sequence belongs to the dUTPase family. Mg(2+) serves as cofactor.

The catalysed reaction is dUTP + H2O = dUMP + diphosphate + H(+). It participates in pyrimidine metabolism; dUMP biosynthesis; dUMP from dCTP (dUTP route): step 2/2. In terms of biological role, this enzyme is involved in nucleotide metabolism: it produces dUMP, the immediate precursor of thymidine nucleotides and it decreases the intracellular concentration of dUTP so that uracil cannot be incorporated into DNA. This is Deoxyuridine 5'-triphosphate nucleotidohydrolase from Wolinella succinogenes (strain ATCC 29543 / DSM 1740 / CCUG 13145 / JCM 31913 / LMG 7466 / NCTC 11488 / FDC 602W) (Vibrio succinogenes).